We begin with the raw amino-acid sequence, 234 residues long: Carboxy-S-adenosyl-L-methionine synthase (234 aa).

Residues Y35, 60-62 (GCS), 83-84 (DN), and R191 each bind S-adenosyl-L-methionine.

It belongs to the class I-like SAM-binding methyltransferase superfamily. Cx-SAM synthase family. Homodimer.

It carries out the reaction prephenate + S-adenosyl-L-methionine = carboxy-S-adenosyl-L-methionine + 3-phenylpyruvate + H2O. Catalyzes the conversion of S-adenosyl-L-methionine (SAM) to carboxy-S-adenosyl-L-methionine (Cx-SAM). The protein is Carboxy-S-adenosyl-L-methionine synthase of Campylobacter lari (strain RM2100 / D67 / ATCC BAA-1060).